A 129-amino-acid polypeptide reads, in one-letter code: MKRARGFTLLEVLVALAIFAMVAASVLSASARSLQNASRLEDKTLAMWIADNRLNELQLEQTPPSSGRNQGELEFAGRRWEWRTQVDSTAEQDMRRVIVWVAAKPLGRERGSIEERAAARLVGFLGSQP.

Residues 1–6 (MKRARG) constitute a propeptide, leader sequence. N-methylphenylalanine is present on F7. Residues 7-27 (FTLLEVLVALAIFAMVAASVL) form a helical membrane-spanning segment.

The protein belongs to the GSP I family. Type II secretion is composed of four main components: the outer membrane complex, the inner membrane complex, the cytoplasmic secretion ATPase and the periplasm-spanning pseudopilus. Forms the tip of the type II pseudopilus by interacting with XcpU, XcpW and XcpX. Interacts with core component XcpT. Post-translationally, cleaved by prepilin peptidase. Methylated by prepilin peptidase at the amino group of the N-terminal phenylalanine once the leader sequence is cleaved by prepilin peptidase.

It is found in the cell inner membrane. Its function is as follows. Component of the type II secretion system required for the energy-dependent secretion of extracellular factors such as proteases and toxins from the periplasm. Part of the pseudopilus tip complex that is critical for the recognition and binding of secretion substrates. Type II pseudopilus confers increased bacterial adhesive capabilities. The sequence is that of Type II secretion system protein I (xcpV) from Pseudomonas aeruginosa (strain ATCC 15692 / DSM 22644 / CIP 104116 / JCM 14847 / LMG 12228 / 1C / PRS 101 / PAO1).